The following is a 642-amino-acid chain: 1-deoxy-D-xylulose-5-phosphate synthase 2 (642 aa).

Thiamine diphosphate contacts are provided by residues histidine 73 and 113–115; that span reads SHA. Aspartate 144 provides a ligand contact to Mg(2+). Thiamine diphosphate contacts are provided by residues 145–146, asparagine 174, tyrosine 285, and glutamate 366; that span reads GA. A Mg(2+)-binding site is contributed by asparagine 174.

This sequence belongs to the transketolase family. DXPS subfamily. Homodimer. Requires Mg(2+) as cofactor. It depends on thiamine diphosphate as a cofactor.

It carries out the reaction D-glyceraldehyde 3-phosphate + pyruvate + H(+) = 1-deoxy-D-xylulose 5-phosphate + CO2. It functions in the pathway metabolic intermediate biosynthesis; 1-deoxy-D-xylulose 5-phosphate biosynthesis; 1-deoxy-D-xylulose 5-phosphate from D-glyceraldehyde 3-phosphate and pyruvate: step 1/1. Its function is as follows. Catalyzes the acyloin condensation reaction between C atoms 2 and 3 of pyruvate and glyceraldehyde 3-phosphate to yield 1-deoxy-D-xylulose-5-phosphate (DXP). The protein is 1-deoxy-D-xylulose-5-phosphate synthase 2 of Streptomyces avermitilis (strain ATCC 31267 / DSM 46492 / JCM 5070 / NBRC 14893 / NCIMB 12804 / NRRL 8165 / MA-4680).